The chain runs to 226 residues: TPD1 protein homolog 1A (226 aa).

The signal sequence occupies residues 1 to 35; it reads MRVSSASSTPPPPAFAAAAWAVVLLAMLRSDVALA.

In terms of assembly, interacts with MSP1. Expressed in roots, and anthers and ovules during meiosis.

Its function is as follows. Involved in cell specification during anther development. Required for the differentiation of primary parietal cells into secondary parietal cells in anthers. May serve as an extracellular ligand for the MSP1 receptor kinase to limit sporocyte number in ovules. This is TPD1 protein homolog 1A from Oryza sativa subsp. japonica (Rice).